The primary structure comprises 384 residues: Cytochrome b (384 aa).

Transmembrane regions (helical) follow at residues 33–53, 77–98, 113–133, and 178–198; these read YGSLLFLCLIIQIATGLFLAM, WLIRNMHANGASFFFICLYLHI, WNVGVILFLLVMMTAFVGYVL, and FFAFHFLFPFVIAAAAVIHLL. Residues H83 and H97 each coordinate heme b. Heme b contacts are provided by H182 and H196. An a ubiquinone-binding site is contributed by H201. 4 helical membrane-spanning segments follow: residues 226 to 246, 288 to 308, 320 to 340, and 347 to 367; these read YKDLLGFALMLLALTSLALFT, LGGVLALLFSILVLMVVPILH, LSQMLFWTLVADVLILTWIGG, and FIIIGQVASVLYFMLFLVLMP.

Belongs to the cytochrome b family. As to quaternary structure, the cytochrome bc1 complex contains 3 respiratory subunits (MT-CYB, CYC1 and UQCRFS1), 2 core proteins (UQCRC1 and UQCRC2) and probably 6 low-molecular weight proteins. Requires heme b as cofactor.

Its subcellular location is the mitochondrion inner membrane. Its function is as follows. Component of the ubiquinol-cytochrome c reductase complex (complex III or cytochrome b-c1 complex) that is part of the mitochondrial respiratory chain. The b-c1 complex mediates electron transfer from ubiquinol to cytochrome c. Contributes to the generation of a proton gradient across the mitochondrial membrane that is then used for ATP synthesis. This is Cytochrome b (mt-cyb) from Anoplogaster cornuta (Common fangtooth).